A 562-amino-acid chain; its full sequence is Probable sesquiterpene synthase (562 aa).

Mg(2+) contacts are provided by aspartate 315, aspartate 319, and glutamate 467. A DDXXD motif motif is present at residues 315-319; the sequence is DDIYD.

Belongs to the terpene synthase family. Tpsa subfamily. Requires Mg(2+) as cofactor. Mn(2+) is required as a cofactor.

In terms of biological role, sesquiterpene synthase. In Santalum murrayanum (Bitter quandong), this protein is Probable sesquiterpene synthase (STPS).